The chain runs to 244 residues: tRNA pseudouridine synthase A (244 aa).

The Nucleophile role is filled by Asp-52. Tyr-110 serves as a coordination point for substrate.

Belongs to the tRNA pseudouridine synthase TruA family. In terms of assembly, homodimer.

The catalysed reaction is uridine(38/39/40) in tRNA = pseudouridine(38/39/40) in tRNA. Functionally, formation of pseudouridine at positions 38, 39 and 40 in the anticodon stem and loop of transfer RNAs. The protein is tRNA pseudouridine synthase A of Clostridium botulinum (strain Alaska E43 / Type E3).